The chain runs to 299 residues: Hemolysin C homolog (299 aa).

2 consecutive CBS domains span residues 80 to 142 and 145 to 202; these read MVPR…NGRL and LIRK…IDDE.

This sequence belongs to the UPF0053 family. Hemolysin C subfamily.

The chain is Hemolysin C homolog (tlyC) from Rickettsia conorii (strain ATCC VR-613 / Malish 7).